A 440-amino-acid polypeptide reads, in one-letter code: Chromosome partition protein MukF (440 aa).

Residues 208–236 (LSETSGTLRELQDTLEAAGDKLQANLLRI) form a leucine-zipper region.

It belongs to the MukF family. Interacts, and probably forms a ternary complex, with MukE and MukB via its C-terminal region. The complex formation is stimulated by calcium or magnesium. It is required for an interaction between MukE and MukB.

The protein localises to the cytoplasm. The protein resides in the nucleoid. Functionally, involved in chromosome condensation, segregation and cell cycle progression. May participate in facilitating chromosome segregation by condensation DNA from both sides of a centrally located replisome during cell division. Not required for mini-F plasmid partitioning. Probably acts via its interaction with MukB and MukE. Overexpression results in anucleate cells. It has a calcium binding activity. The polypeptide is Chromosome partition protein MukF (Escherichia coli (strain UTI89 / UPEC)).